A 79-amino-acid chain; its full sequence is MKTLLLTLVMVTIMCLDLGYTLTCYKSLSGTVVCKPHETICYRRLIPATHGNAIIDRGCSTSCPGGNRPVCCSTDLCNK.

A signal peptide spans 1 to 21 (MKTLLLTLVMVTIMCLDLGYT). Cystine bridges form between Cys-24–Cys-41, Cys-34–Cys-59, Cys-63–Cys-71, and Cys-72–Cys-77.

The protein belongs to the three-finger toxin family. Short-chain subfamily. Type III alpha-neurotoxin sub-subfamily. Expressed by the venom gland.

It localises to the secreted. In terms of biological role, binds with high affinity to muscle nicotinic acetylcholine receptor (nAChR) and hinders acetylcholine binding to the receptor, thereby impairing neuromuscular transmission. Competes with the binding of alpha-bungarotoxin on muscle AChR (from Torpedo) with an IC(50) of 0.18 uM. Causes muscle paralysis, spasms and increased respiration. In Pseudonaja textilis (Eastern brown snake), this protein is Short neurotoxin 6.